A 196-amino-acid chain; its full sequence is Alpha-crystallin A chain (196 aa).

N-acetylmethionine is present on Met1. The interval 1–63 (MDVTIQHPWF…RTVLDSCISE (63 aa)) is required for complex formation with BFSP1 and BFSP2. Gln6 carries the post-translational modification Deamidated glutamine; partial. Ser45 is subject to Phosphoserine. Residue Gln50 is modified to Deamidated glutamine; partial. One can recognise a sHSP domain in the interval 76 to 185 (HAGNPENNPI…GHSERAIPVS (110 aa)). N6-acetyllysine is present on residues Lys93 and Lys122. His123 provides a ligand contact to Zn(2+). Residue Asn124 is modified to Deamidated asparagine; partial. Zn(2+)-binding residues include Glu125 and His130. Residue Ser145 is modified to Phosphoserine. Gln170 bears the Deamidated glutamine; partial mark. Positions 170 to 196 (QSGLDAGHSERAIPVSQEEKPSSAPLF) are disordered. The span at 176 to 190 (GHSERAIPVSQEEKP) shows a compositional bias: basic and acidic residues. Position 177 (His177) interacts with Zn(2+). The O-linked (GlcNAc) serine glycan is linked to Ser185.

This sequence belongs to the small heat shock protein (HSP20) family. Heteromer composed of three CRYAA and one CRYAB subunits. Inter-subunit bridging via zinc ions enhances stability, which is crucial as there is no protein turn over in the lens. Can also form homodimers and homotetramers (dimers of dimers) which serve as the building blocks of homooligomers. Within homooligomers, the zinc-binding motif is created from residues of 3 different molecules. His-123 and Glu-125 from one molecule are ligands of the zinc ion, and His-130 and His-177 residues from additional molecules complete the site with tetrahedral coordination geometry. Part of a complex required for lens intermediate filament formation composed of BFSP1, BFSP2 and CRYAA. Post-translationally, acetylation at Lys-93 may increase chaperone activity. Undergoes age-dependent proteolytical cleavage at the C-terminus.

It is found in the cytoplasm. The protein localises to the nucleus. Functionally, contributes to the transparency and refractive index of the lens. Acts as a chaperone, preventing aggregation of various proteins under a wide range of stress conditions. Required for the correct formation of lens intermediate filaments as part of a complex composed of BFSP1, BFSP2 and CRYAA. This Spalax ehrenbergi (Middle East blind mole rat) protein is Alpha-crystallin A chain (CRYAA).